A 778-amino-acid polypeptide reads, in one-letter code: Receptor like protein 28 (778 aa).

Residues 1-24 (MSGSHLRLRFLSLLLLCCVSSSTS) form the signal peptide. Residues 25–739 (SLFTFSYPVL…EEQEQVLNWK (715 aa)) lie on the Extracellular side of the membrane. 8 N-linked (GlcNAc...) asparagine glycosylation sites follow: Asn-60, Asn-72, Asn-93, Asn-106, Asn-111, Asn-147, Asn-170, and Asn-173. LRR repeat units follow at residues 99-123 (FHQLRFLNLSHNNFTSTSFPSEFGN), 125-147 (NKVEVLDLSFNSFTGQVPSSFSN), 148-171 (LSQLTELHLSNNQLTGGFPQVQNL), 172-195 (TNLSHLDFENNKFSGTVPSSLLMM), and 197-219 (FLSYLNLYGNHFTGSIEVSTSSK). An LRR 6; degenerate repeat occupies 220-240 (LEILYLGLKPFEGQILEPISK). LRR repeat units follow at residues 241-265 (LINLKRLELSFLNISYPLDLNLFSS), 266-291 (LKSLTYLDLSGNSISPRSLRSDLYIP), 293-313 (TLEKLLLEQCGIIEFPNILKT), 314-338 (LQKLEYIDMSNNRINGKIPEWLWRL), 340-363 (RLRSMSLANNSFNGFEGSTDVLVN), and 364-387 (SSMEILFMHSNNIQGALPNLPLSI). A glycan (N-linked (GlcNAc...) asparagine) is linked at Asn-253. 2 N-linked (GlcNAc...) asparagine glycosylation sites follow: Asn-348 and Asn-363. The LRR 13; degenerate repeat unit spans residues 388–407 (KAFSAGYNNFSGEIPLSICN). Residues Asn-396, Asn-407, Asn-420, Asn-431, and Asn-476 are each glycosylated (N-linked (GlcNAc...) asparagine). LRR repeat units lie at residues 408 to 429 (RSSLAALSLPYNNFTGKIPQCL), 430 to 453 (SNLTFVHLRKNNLEGSIPDTLCAG), 455 to 477 (SLQTLDIGFNLISGTLPRSLLNC), 479 to 500 (SLEFLSVDNNRIKDTFPFWLKA), 501 to 525 (LPNLQVLILSSNKLYGPIAPPHQSP), 528 to 552 (FPELRIFEIADNMFTGTLSPRYFVN), 601 to 625 (LNSYSAIDFSGNRLEGQIPKSIGLL), 626 to 649 (KELIALNLSNNAFTCHIPLSLANA), 650 to 673 (TELESLDLSRNQLSGTIPNGLKTL), and 678 to 700 (YINVSHNKLKGTQIIGQHKSSFE). N-linked (GlcNAc...) asparagine glycosylation is found at Asn-632 and Asn-648. An N-linked (GlcNAc...) asparagine glycan is attached at Asn-680. Residues 740–760 (AVATGYGTGLLLGLAIAQVIA) traverse the membrane as a helical segment. Residues 761–778 (SYKPDWLVKIIGLFRFCF) lie on the Cytoplasmic side of the membrane.

It belongs to the RLP family.

The protein resides in the cell membrane. In Arabidopsis thaliana (Mouse-ear cress), this protein is Receptor like protein 28.